We begin with the raw amino-acid sequence, 315 residues long: Methionyl-tRNA formyltransferase (315 aa).

113 to 116 (SLLP) contacts (6S)-5,6,7,8-tetrahydrofolate.

Belongs to the Fmt family.

The catalysed reaction is L-methionyl-tRNA(fMet) + (6R)-10-formyltetrahydrofolate = N-formyl-L-methionyl-tRNA(fMet) + (6S)-5,6,7,8-tetrahydrofolate + H(+). Functionally, attaches a formyl group to the free amino group of methionyl-tRNA(fMet). The formyl group appears to play a dual role in the initiator identity of N-formylmethionyl-tRNA by promoting its recognition by IF2 and preventing the misappropriation of this tRNA by the elongation apparatus. This Shigella boydii serotype 18 (strain CDC 3083-94 / BS512) protein is Methionyl-tRNA formyltransferase.